A 297-amino-acid polypeptide reads, in one-letter code: MSEVKFEHKIASWKVDEVNSLKELLKSGNVIALIDMMEVPSVQLQEIRDTIRDSMTLKMSRNTLMKRAIEEVAEETGNPSFTKLIDCMEKGAALIATEMNPFKLYKTLNESKSPAPIKAGATAPCDIEIKAGSTGMPPGPFLSELKAVGLPAAIEKGKIGIKEDTIVAKEGDVVSAKLAVVLSKLDIKPMEVGLNVLGVYEDGIVYDPEILKIDEDEFLAKLQSAYTGAFNLSVNAVIPTSATIETIVQKAFSNAKAVSIEGAFLTSETSDAILGKATAQMLAVAKLAGEDALDDEL.

Belongs to the universal ribosomal protein uL10 family. As to quaternary structure, part of the 50S ribosomal subunit. Forms part of the ribosomal stalk which helps the ribosome interact with GTP-bound translation factors. Forms a heptameric L10(L12)2(L12)2(L12)2 complex, where L10 forms an elongated spine to which the L12 dimers bind in a sequential fashion.

Forms part of the ribosomal stalk, playing a central role in the interaction of the ribosome with GTP-bound translation factors. The protein is Large ribosomal subunit protein uL10 of Methanococcus voltae.